The chain runs to 479 residues: Mitochondria-eating protein (479 aa).

Coiled coils occupy residues 109–161 (ERKL…LATT) and 187–223 (LRRLDHLNDCEQQIERLRDELSILDAQKSVLQSRIAR). Disordered regions lie at residues 220–251 (RIARSRSPSPRRIRSRSPSPLPLRSCSPGRAR) and 456–479 (RSRSRSQNRSRSVSPLLSHLSRSR). Low complexity predominate over residues 235-249 (RSPSPLPLRSCSPGR).

The protein belongs to the MIEAP family.

Its subcellular location is the cytoplasm. The protein localises to the cytosol. It localises to the mitochondrion outer membrane. The protein resides in the mitochondrion matrix. Functionally, key regulator of mitochondrial quality that mediates the repairing or degradation of unhealthy mitochondria in response to mitochondrial damage. Mediator of mitochondrial protein catabolic process (also named MALM) by mediating the degradation of damaged proteins inside mitochondria by promoting the accumulation in the mitochondrial matrix of hydrolases that are characteristic of the lysosomal lumen. Also involved in mitochondrion degradation of damaged mitochondria by promoting the formation of vacuole-like structures (named MIV), which engulf and degrade unhealthy mitochondria by accumulating lysosomes. Binds cardiolipin. May form molecular condensates (non-membrane-bounded organelles) within mitochondria that compartmentalize and promote cardiolipin metabolism. In Gallus gallus (Chicken), this protein is Mitochondria-eating protein (SPATA18).